Reading from the N-terminus, the 249-residue chain is Flagellar brake protein YcgR (249 aa).

Residues 117 to 236 form the PilZ domain; sequence QRREFFRVDA…ERELQQVIFS (120 aa).

It belongs to the YcgR family. As to quaternary structure, monomer. Interacts with the flagellar basal bodies.

It is found in the bacterial flagellum basal body. In terms of biological role, acts as a flagellar brake, regulating swimming and swarming in a bis-(3'-5') cyclic diguanylic acid (c-di-GMP)-dependent manner. Binds 1 c-di-GMP dimer per subunit. Increasing levels of c-di-GMP lead to decreased motility. This is Flagellar brake protein YcgR from Erwinia tasmaniensis (strain DSM 17950 / CFBP 7177 / CIP 109463 / NCPPB 4357 / Et1/99).